The sequence spans 514 residues: Serine--tRNA ligase, cytoplasmic (514 aa).

Methionine 1 carries the post-translational modification N-acetylmethionine. An interaction with tRNA region spans residues 9–61; sequence RVDKGGDPALIRETQEKRFKDPGLVDQLVKADSEWRRCRFRADNLNKLKNLCS. Serine 241 carries the post-translational modification Phosphoserine. L-serine-binding residues include threonine 271 and arginine 302. ATP-binding positions include 302–304 and 318–321; these read RQE and VHQF. Lysine 323 is subject to N6-acetyllysine. Glutamate 325 is a binding site for L-serine. Residue 391 to 394 participates in ATP binding; the sequence is ELVS. An L-serine-binding site is contributed by asparagine 427. The interval 471–514 is disordered; sequence VKPAPIDQEPSKKQKKQHEGSKKKAAARDVALESRLQNMEVTDA. Basic and acidic residues predominate over residues 479–502; the sequence is EPSKKQKKQHEGSKKKAAARDVAL. The Nuclear localization signal motif lies at 482–494; that stretch reads KKQKKQHEGSKKK. Polar residues predominate over residues 505-514; sequence RLQNMEVTDA.

This sequence belongs to the class-II aminoacyl-tRNA synthetase family. Type-1 seryl-tRNA synthetase subfamily. In terms of assembly, homodimer. The tRNA molecule may bind across the dimer. Interacts with SIRT2. Interacts with METTL6; interaction is required for the tRNA N(3)-methylcytidine methyltransferase activity of METTL6.

The protein resides in the cytoplasm. It localises to the nucleus. It carries out the reaction tRNA(Ser) + L-serine + ATP = L-seryl-tRNA(Ser) + AMP + diphosphate + H(+). The enzyme catalyses tRNA(Sec) + L-serine + ATP = L-seryl-tRNA(Sec) + AMP + diphosphate + H(+). It functions in the pathway aminoacyl-tRNA biosynthesis; selenocysteinyl-tRNA(Sec) biosynthesis; L-seryl-tRNA(Sec) from L-serine and tRNA(Sec): step 1/1. Catalyzes the attachment of serine to tRNA(Ser) in a two-step reaction: serine is first activated by ATP to form Ser-AMP and then transferred to the acceptor end of tRNA(Ser). Is probably also able to aminoacylate tRNA(Sec) with serine, to form the misacylated tRNA L-seryl-tRNA(Sec), which will be further converted into selenocysteinyl-tRNA(Sec). In the nucleus, binds to the VEGFA core promoter and prevents MYC binding and transcriptional activation by MYC. Recruits SIRT2 to the VEGFA promoter, promoting deacetylation of histone H4 at 'Lys-16' (H4K16). Thereby, inhibits the production of VEGFA and sprouting angiogenesis mediated by VEGFA. The polypeptide is Serine--tRNA ligase, cytoplasmic (SARS1) (Macaca fascicularis (Crab-eating macaque)).